A 231-amino-acid polypeptide reads, in one-letter code: MLGKFIVFEGGEGAGKTTQLNLVFEWLTGSGWTNRIKGYIQGDYPSVLTTREPGGTALGKSIRKLLLDVTATGNESIDERAELLLFAADRAQHVSSCLLPHLQQGALVLCDRYTDSTIAYQGYGRELDLTLIHQLNQIATQGLVSDLTFWLDIDPEFGLARTHDREQDPEIETDRMEANEIAFHQRLRQGFADLARQHPERIFRIEAHQSDDVVAQQIQGILESRLQEWYP.

Residue 10–17 (GGEGAGKT) coordinates ATP.

The protein belongs to the thymidylate kinase family.

The catalysed reaction is dTMP + ATP = dTDP + ADP. Its function is as follows. Phosphorylation of dTMP to form dTDP in both de novo and salvage pathways of dTTP synthesis. The polypeptide is Thymidylate kinase (Acaryochloris marina (strain MBIC 11017)).